Consider the following 267-residue polypeptide: 3-methyl-2-oxobutanoate hydroxymethyltransferase (267 aa).

2 residues coordinate Mg(2+): aspartate 42 and aspartate 86. 3-methyl-2-oxobutanoate-binding positions include 42–43 (DS), aspartate 86, and lysine 116. Glutamate 118 lines the Mg(2+) pocket. Glutamate 185 acts as the Proton acceptor in catalysis.

It belongs to the PanB family. As to quaternary structure, homodecamer; pentamer of dimers. Requires Mg(2+) as cofactor.

The protein resides in the cytoplasm. It catalyses the reaction 3-methyl-2-oxobutanoate + (6R)-5,10-methylene-5,6,7,8-tetrahydrofolate + H2O = 2-dehydropantoate + (6S)-5,6,7,8-tetrahydrofolate. It functions in the pathway cofactor biosynthesis; (R)-pantothenate biosynthesis; (R)-pantoate from 3-methyl-2-oxobutanoate: step 1/2. Functionally, catalyzes the reversible reaction in which hydroxymethyl group from 5,10-methylenetetrahydrofolate is transferred onto alpha-ketoisovalerate to form ketopantoate. The chain is 3-methyl-2-oxobutanoate hydroxymethyltransferase from Parasynechococcus marenigrum (strain WH8102).